We begin with the raw amino-acid sequence, 465 residues long: Dihydrolipoyl dehydrogenase (465 aa).

FAD is bound by residues 34-42, K51, and G114; that span reads EEREAGGTC. C42 and C47 are joined by a disulfide. NAD(+) is bound by residues 180–184, E203, V237, and 264–267; these read GGGVI and SIGR. FAD is bound by residues D307 and A315. H439 (proton acceptor) is an active-site residue.

This sequence belongs to the class-I pyridine nucleotide-disulfide oxidoreductase family. The cofactor is FAD.

The protein resides in the cytoplasm. It carries out the reaction N(6)-[(R)-dihydrolipoyl]-L-lysyl-[protein] + NAD(+) = N(6)-[(R)-lipoyl]-L-lysyl-[protein] + NADH + H(+). The branched-chain alpha-keto dehydrogenase complex catalyzes the overall conversion of alpha-keto acids to acyl-CoA and CO(2). It contains multiple copies of 3 enzymatic components: branched-chain alpha-keto acid decarboxylase (E1), lipoamide acyltransferase (E2) and lipoamide dehydrogenase (E3). This Chlamydia muridarum (strain MoPn / Nigg) protein is Dihydrolipoyl dehydrogenase (lpdA).